The chain runs to 343 residues: Interferon-inducible protein AIM2 (343 aa).

A Pyrin domain is found at 1 to 87; that stretch reads MESKYKEILL…AKRLQEEKEK (87 aa). In terms of domain architecture, HIN-200 spans 138 to 337; the sequence is MVAQQESIRE…SGVHSTIKVI (200 aa).

It belongs to the HIN-200 family. In terms of assembly, self-associates; forms homooligomers in response to cytosolic double-stranded DNA (dsDNA) and the dsDNA seems to serve as oligomerization platform. Component of AIM2 inflammasome, which consists of a signal sensor component (AIM2), an adapter (PYCARD/ASC), which recruits an effector pro-inflammatory caspase (CASP1). Interacts (via pyrin domain) with PYCARD/ASC (via pyrin domain); interaction is direct. Component of the AIM2 PANoptosome complex, a multiprotein complex that drives inflammatory cell death (PANoptosis). Interacts with PYDC5; disrupts assembly of the AIM2 inflammasome complex. Interacts with EIF2AK2/PKR. Interacts with MAPRE1. Interacts with IFI16. Interacts with isoform IFI16-beta of IFI16; preventing the interaction between AIM2 and PYCARD/ASC. Interacts with RACK1; promoting association with PP2A phosphatase and dephosphorylation of AKT1. Interacts with TRIM11; promoting AIM2 recruitment to autophagosomes and autophagy-dependent degradation. (Microbial infection) Interacts with human herpesvirus 8 protein SOX/ORF37; this interaction inhibits AIM2 polymerization and subsequent inflammasome activation. Post-translationally, degraded via selective autophagy following interaction with TRIM11. As to expression, expressed in spleen, small intestine, peripheral blood leukocytes, and testis.

The protein localises to the cytoplasm. It is found in the inflammasome. The protein resides in the nucleus. Its activity is regulated as follows. Inactive in absence of double-stranded DNA (dsDNA). Homooligomerizes upon binding to dsDNA, dsDNA serving as an oligomerization platform. AIM2 requires large dsDNA to generate a structural template that couples dsDNA ligand-binding and homooligomerization. Homooligomerization is followed by recruitment of PYCARD/ASC to initiate speck formation (nucleation). AIM2 and PYCARD/ASC homooligomer filaments assemble bidirectionally and the recognition between AIM2 and PYCARD/ASC oligomers occurs in a head-to-tail manner. Clustered PYCARD/ASC nucleates the formation of CASP1 filaments through the interaction of their respective CARD domains, acting as a platform for CASP1 polymerization and activation. Active CASP1 then specifically processes protein precursors, such as gasdermin-D (GSDMD), IL1B and IL18, leading to the release of mature cytokines in the extracellular milieu or pyroptosis, depending on cell type. AIM2 can be activated in response to events that cause genomic DNA (HIV protease inhibitor nelfinavir) or mitochondrial DNA release in the cytoplasm (such as Perfluoroalkyl substance pollutants or cholesterol overload). Activation of the AIM2 inflammasome is inhibited by isoform IFI16-beta of IFI16, which prevents the interaction between AIM2 and PYCARD/ASC. Activation of the AIM2 inflammasome is inhibited by TRIM11, which promotes autophagy-dependent degradation of AIM2. Its function is as follows. Sensor component of the AIM2 inflammasome, which mediates inflammasome activation in response to the presence of double-stranded DNA (dsDNA) in the cytosol, leading to subsequent pyroptosis. Inflammasomes are supramolecular complexes that assemble in the cytosol in response to pathogens and other damage-associated signals and play critical roles in innate immunity and inflammation. Acts as a recognition receptor (PRR): specifically recognizes and binds dsDNA in the cytosol, and mediates the formation of the inflammasome polymeric complex composed of AIM2, CASP1 and PYCARD/ASC. Recruitment of pro-caspase-1 (proCASP1) to the AIM2 inflammasome promotes caspase-1 (CASP1) activation, which subsequently cleaves and activates inflammatory cytokines IL1B and IL18 and gasdermin-D (GSDMD), promoting cytokine secretion. In some cells, CASP1 activation mediates cleavage and activation of GSDMD, triggering pyroptosis without promoting cytokine secretion. Detects cytosolic dsDNA of viral and bacterial origin in a non-sequence-specific manner. Involved in the DNA damage response caused by acute ionizing radiation by mediating pyroptosis of intestinal epithelial cells and bone marrow cells in response to double-strand DNA breaks. Mechanistically, AIM2 senses DNA damage in the nucleus to mediate inflammasome assembly and inflammatory cell death. Also acts as a regulator of neurodevelopment via its role in the DNA damage response: acts by promoting neural cell death in response to DNA damage in the developing brain, thereby purging genetically compromised cells of the central nervous system. Pyroptosis mediated by the AIM2 inflammasome in response to DNA damage is dependent on GSDMD without involving IL1B and IL18 cytokine secretion. Also acts as a mediator of pyroptosis, necroptosis and apoptosis (PANoptosis), an integral part of host defense against pathogens, in response to bacterial infection. Can also trigger PYCARD/ASC-dependent, caspase-1-independent cell death that involves caspase-8 (CASP8). Functionally, also acts as a tumor suppressor independently of its role in inflammatory response. Able to suppress overt cell proliferation in enterocytes: restricts stem cell proliferation in the intestinal mucosa in an inflammasome-independent manner, contributing to a decrease in the likelihood of colorectal cancer development. AIM2 suppresses cell proliferation by inhibiting phosphorylation of AKT1 at 'Ser-473', preventing AKT1 activation and AKT-mTOR signaling pathway. Inhibits AKT1 phosphorylation both by inhibiting the activity of PRKDC/DNA-PK kinase and promoting dephosphorylation by PP2A phosphatase. Also acts as a key regulator of regulatory T-cells (Treg) homeostasis by promoting their stability: acts by preventing AKT1 activation. Its role in Treg homeostasis is important to restain autoimmune diseases. This Homo sapiens (Human) protein is Interferon-inducible protein AIM2.